Reading from the N-terminus, the 312-residue chain is Zinc import ATP-binding protein ZnuC (312 aa).

Residues 13-228 form the ABC transporter domain; it reads VSLEDVGVLR…PEYVRLFGSR (216 aa). 45–52 lines the ATP pocket; the sequence is GPNGSGKS. A disordered region spans residues 241-312; it reads DHTHLPDGRV…HSRSGEGRHA (72 aa). Residues 243–312 are compositionally biased toward basic and acidic residues; sequence THLPDGRVLH…HSRSGEGRHA (70 aa).

This sequence belongs to the ABC transporter superfamily. Zinc importer (TC 3.A.1.15.5) family. The complex is composed of two ATP-binding proteins (ZnuC), two transmembrane proteins (ZnuB) and a solute-binding protein (ZnuA).

It localises to the cell inner membrane. It catalyses the reaction Zn(2+)(out) + ATP(in) + H2O(in) = Zn(2+)(in) + ADP(in) + phosphate(in) + H(+)(in). Part of the ABC transporter complex ZnuABC involved in zinc import. Responsible for energy coupling to the transport system. The protein is Zinc import ATP-binding protein ZnuC of Rhizobium etli (strain ATCC 51251 / DSM 11541 / JCM 21823 / NBRC 15573 / CFN 42).